The following is a 184-amino-acid chain: Inosine triphosphate pyrophosphatase (184 aa).

Residue 9 to 14 (TSNASK) coordinates ITP. E38 is a binding site for Mg(2+). Residues K50, 66–67 (DT), K83, 142–145 (FGWD), K163, and 168–169 (HR) each bind ITP.

It belongs to the HAM1 NTPase family. As to quaternary structure, homodimer. Mg(2+) serves as cofactor. It depends on Mn(2+) as a cofactor.

The protein localises to the cytoplasm. The protein resides in the nucleus. It carries out the reaction ITP + H2O = IMP + diphosphate + H(+). It catalyses the reaction dITP + H2O = dIMP + diphosphate + H(+). The enzyme catalyses XTP + H2O = XMP + diphosphate + H(+). In terms of biological role, pyrophosphatase that hydrolyzes non-canonical purine nucleotides such as inosine triphosphate (ITP), deoxyinosine triphosphate (dITP) or xanthosine 5'-triphosphate (XTP) to their respective monophosphate derivatives. The enzyme does not distinguish between the deoxy- and ribose forms. Probably excludes non-canonical purines from RNA and DNA precursor pools, thus preventing their incorporation into RNA and DNA and avoiding chromosomal lesions. In Tuber melanosporum (strain Mel28) (Perigord black truffle), this protein is Inosine triphosphate pyrophosphatase.